The following is a 427-amino-acid chain: Putative F-box protein At3g44060 (427 aa).

The F-box domain maps to 1 to 46; the sequence is MDCLPDDLLVQILYLLPTKEAVSTSVLSKRWRTLFTRSDNLDFHDP.

The protein is Putative F-box protein At3g44060 of Arabidopsis thaliana (Mouse-ear cress).